Reading from the N-terminus, the 192-residue chain is Fe/S biogenesis protein NfuA (192 aa).

[4Fe-4S] cluster is bound by residues Cys-149 and Cys-152.

The protein belongs to the NfuA family. In terms of assembly, homodimer. [4Fe-4S] cluster is required as a cofactor.

In terms of biological role, involved in iron-sulfur cluster biogenesis. Binds a 4Fe-4S cluster, can transfer this cluster to apoproteins, and thereby intervenes in the maturation of Fe/S proteins. Could also act as a scaffold/chaperone for damaged Fe/S proteins. The sequence is that of Fe/S biogenesis protein NfuA from Pseudoalteromonas atlantica (strain T6c / ATCC BAA-1087).